A 145-amino-acid polypeptide reads, in one-letter code: 6-pyruvoyl tetrahydrobiopterin synthase (145 aa).

Serine 19 is modified (phosphoserine; by PKG). Histidine 24 lines the Zn(2+) pocket. The residue at position 28 (serine 28) is a Phosphoserine. The active-site Proton acceptor is cysteine 43. Positions 49 and 51 each coordinate Zn(2+). Histidine 90 serves as the catalytic Charge relay system. Phosphotyrosine is present on tyrosine 128. Glutamate 134 (charge relay system) is an active-site residue.

This sequence belongs to the PTPS family. Homohexamer formed of two homotrimers in a head to head fashion. Zn(2+) serves as cofactor. In terms of processing, phosphorylation of Ser-19 is required for maximal enzyme activity.

It catalyses the reaction 7,8-dihydroneopterin 3'-triphosphate = 6-pyruvoyl-5,6,7,8-tetrahydropterin + triphosphate + H(+). Its pathway is cofactor biosynthesis; tetrahydrobiopterin biosynthesis; tetrahydrobiopterin from 7,8-dihydroneopterin triphosphate: step 1/3. Involved in the biosynthesis of tetrahydrobiopterin, an essential cofactor of aromatic amino acid hydroxylases. Catalyzes the transformation of 7,8-dihydroneopterin triphosphate into 6-pyruvoyl tetrahydropterin. The sequence is that of 6-pyruvoyl tetrahydrobiopterin synthase (PTS) from Homo sapiens (Human).